The primary structure comprises 621 residues: ATP-dependent DNA helicase Q1 (621 aa).

Residues 100 to 275 enclose the Helicase ATP-binding domain; the sequence is VNATMARKDI…QKILCVEKCL (176 aa). Position 113–120 (113–120) interacts with ATP; it reads MPTGGGKS. The DEVH box motif lies at 219-222; that stretch reads DEVH. One can recognise a Helicase C-terminal domain in the interval 296-451; the sequence is SAEDFIENIA…EMVSYCQNIS (156 aa). Zn(2+) contacts are provided by Cys-453, Cys-471, Cys-475, and Cys-478. Residues Lys-514 and Lys-522 each carry the N6-acetyllysine modification. Ser-597 and Ser-602 each carry phosphoserine.

This sequence belongs to the helicase family. RecQ subfamily. May form homodimers or higher order oligomers. Interacts with EXO1. Interacts with MLH1. Interacts with PARP1. It depends on Mg(2+) as a cofactor. Requires Mn(2+) as cofactor. Zn(2+) serves as cofactor.

It localises to the nucleus. The catalysed reaction is Couples ATP hydrolysis with the unwinding of duplex DNA by translocating in the 3'-5' direction.. It catalyses the reaction ATP + H2O = ADP + phosphate + H(+). It carries out the reaction dATP + H2O = dADP + phosphate + H(+). In terms of biological role, DNA helicase that plays a role in DNA damage repair and genome stability. Exhibits a magnesium- and ATP-dependent DNA-helicase activity that unwinds single- and double-stranded DNA in a 3'-5' direction. Plays a role in restoring regressed replication forks. Required to restart stalled replication forks induced by abortive topoisomerase 1 and 2 lesions. May play a role in the repair of DNA that is damaged by ultraviolet light or other mutagens. This Rattus norvegicus (Rat) protein is ATP-dependent DNA helicase Q1 (Recql).